Reading from the N-terminus, the 169-residue chain is Lipoprotein signal peptidase (169 aa).

Helical transmembrane passes span 59–79 (PTVLLLLTGVITIMVLAYVIW) and 84–104 (TTLFLLPFALITGGGIGNMID). Active-site residues include Asp-113 and Asp-139. A helical transmembrane segment spans residues 132-152 (WPIFNIADSAITIGACMLMIF).

The protein belongs to the peptidase A8 family.

The protein resides in the cell inner membrane. The catalysed reaction is Release of signal peptides from bacterial membrane prolipoproteins. Hydrolyzes -Xaa-Yaa-Zaa-|-(S,diacylglyceryl)Cys-, in which Xaa is hydrophobic (preferably Leu), and Yaa (Ala or Ser) and Zaa (Gly or Ala) have small, neutral side chains.. It functions in the pathway protein modification; lipoprotein biosynthesis (signal peptide cleavage). In terms of biological role, this protein specifically catalyzes the removal of signal peptides from prolipoproteins. The sequence is that of Lipoprotein signal peptidase from Pelodictyon phaeoclathratiforme (strain DSM 5477 / BU-1).